The following is a 400-amino-acid chain: Enoyl-[acyl-carrier-protein] reductase [NADH] 1 (400 aa).

NAD(+) contacts are provided by residues 48 to 53 (GASSGY), 74 to 75 (FE), 111 to 112 (DA), and 139 to 140 (LA). Tyrosine 225 contacts substrate. The active-site Proton donor is tyrosine 235. NAD(+)-binding positions include lysine 244 and 273 to 275 (VVT).

The protein belongs to the TER reductase family. Monomer.

The enzyme catalyses a 2,3-saturated acyl-[ACP] + NAD(+) = a (2E)-enoyl-[ACP] + NADH + H(+). It participates in lipid metabolism; fatty acid biosynthesis. Functionally, involved in the final reduction of the elongation cycle of fatty acid synthesis (FAS II). Catalyzes the reduction of a carbon-carbon double bond in an enoyl moiety that is covalently linked to an acyl carrier protein (ACP). This chain is Enoyl-[acyl-carrier-protein] reductase [NADH] 1, found in Vibrio parahaemolyticus serotype O3:K6 (strain RIMD 2210633).